The primary structure comprises 615 residues: Chaperone protein DnaK (615 aa).

Position 174 is a phosphothreonine; by autocatalysis (threonine 174). Residues 581-615 (QAAPKDGAEGDAKSADDNTVDGDFEEVDPNKDDKK) form a disordered region. The segment covering 586-596 (DGAEGDAKSAD) has biased composition (basic and acidic residues). The span at 598–607 (NTVDGDFEEV) shows a compositional bias: acidic residues.

Belongs to the heat shock protein 70 family.

Acts as a chaperone. This chain is Chaperone protein DnaK, found in Leuconostoc mesenteroides subsp. mesenteroides (strain ATCC 8293 / DSM 20343 / BCRC 11652 / CCM 1803 / JCM 6124 / NCDO 523 / NBRC 100496 / NCIMB 8023 / NCTC 12954 / NRRL B-1118 / 37Y).